Here is a 587-residue protein sequence, read N- to C-terminus: L-ornithine N(5)-monooxygenase (587 aa).

FAD contacts are provided by residues 53–61 (EKHTSFQWH) and Q72. K77 serves as a coordination point for substrate. 235-238 (GGQS) contributes to the NADP(+) binding site. Residues 282 to 285 (NEVF) and N312 contribute to the substrate site. 312–314 (NYS) is a binding site for NADP(+). Residues 488 to 511 (DNSAASGVSGASTPLTSPSEEEGK) are disordered. A compositionally biased stretch (polar residues) spans 491–505 (AASGVSGASTPLTSP). 567 to 569 (TLL) is a binding site for FAD. A substrate-binding site is contributed by S570.

The protein belongs to the lysine N(6)-hydroxylase/L-ornithine N(5)-oxygenase family. In terms of assembly, homotetramer. Requires FAD as cofactor.

The catalysed reaction is L-ornithine + NADPH + O2 = N(5)-hydroxy-L-ornithine + NADP(+) + H2O. It catalyses the reaction L-ornithine + NADH + O2 = N(5)-hydroxy-L-ornithine + NAD(+) + H2O. It functions in the pathway siderophore biosynthesis; ferrichrome biosynthesis. L-ornithine N(5)-monooxygenase; part of the siderophore biosynthetic pathway. Omphalotus olearius produces ferrichrome A, but no other siderophore has been detected. Ferrichrome A consists of a hexapeptide ring made up of one glycine, two serine, and three N(5)-hydroxyornithine amino acid residues, the latter acylated by trans-(alpha-methyl)-glutaconic acid residues. The biosynthesis of ferrichrome A depends on the hydroxylation of ornithine to N(5)-hydroxyornithine, catalyzed by the monooxygenase omo1. The second step, the acylation of N(5)-hydroxy-L-ornithine is probably catalyzed by the N-acyltransferase ato1. Finally, assembly of ferrichrome A is catalyzed by the nonribosomal peptide synthase (NRPS) fso1. The protein is L-ornithine N(5)-monooxygenase of Omphalotus olearius (Jack o'lantern).